The chain runs to 403 residues: F-box protein At2g40925 (403 aa).

An F-box domain is found at Asn21–Val71.

The protein is F-box protein At2g40925 of Arabidopsis thaliana (Mouse-ear cress).